Reading from the N-terminus, the 99-residue chain is Large ribosomal subunit protein bL27 (99 aa).

A propeptide spanning residues 1-9 (MLIMNLQLF) is cleaved from the precursor.

This sequence belongs to the bacterial ribosomal protein bL27 family. The N-terminus is cleaved by ribosomal processing cysteine protease Prp.

In Clostridium botulinum (strain Alaska E43 / Type E3), this protein is Large ribosomal subunit protein bL27.